A 149-amino-acid chain; its full sequence is Large ribosomal subunit protein bL9 (149 aa).

This sequence belongs to the bacterial ribosomal protein bL9 family.

Binds to the 23S rRNA. The polypeptide is Large ribosomal subunit protein bL9 (Sulfurihydrogenibium sp. (strain YO3AOP1)).